Consider the following 102-residue polypeptide: Large ribosomal subunit protein bL21 (102 aa).

It belongs to the bacterial ribosomal protein bL21 family. Part of the 50S ribosomal subunit. Contacts protein L20.

Its function is as follows. This protein binds to 23S rRNA in the presence of protein L20. This Pseudarthrobacter chlorophenolicus (strain ATCC 700700 / DSM 12829 / CIP 107037 / JCM 12360 / KCTC 9906 / NCIMB 13794 / A6) (Arthrobacter chlorophenolicus) protein is Large ribosomal subunit protein bL21.